The primary structure comprises 334 residues: Formamidase (334 aa).

The region spanning 14–260 (FLVAAIQFPV…WEIVTGEIYP (247 aa)) is the CN hydrolase domain. The Proton acceptor role is filled by glutamate 60. Lysine 133 acts as the Proton donor in catalysis. Cysteine 166 acts as the Nucleophile in catalysis.

It belongs to the carbon-nitrogen hydrolase superfamily. Aliphatic amidase family.

The enzyme catalyses formamide + H2O = formate + NH4(+). Its function is as follows. Is an aliphatic amidase with a restricted substrate specificity, as it only hydrolyzes formamide. This Helicobacter pylori (strain Shi470) protein is Formamidase.